A 923-amino-acid polypeptide reads, in one-letter code: Protocadherin gamma-B5 (923 aa).

The N-terminal stretch at Met-1–Cys-30 is a signal peptide. 6 consecutive Cadherin domains span residues Glu-31 to Phe-133, Thr-134 to Phe-242, Asn-243 to Val-343, Thr-344 to Phe-448, His-449 to Val-558, and Asp-566 to Ile-671. The Extracellular portion of the chain corresponds to Glu-31 to Tyr-687. N-linked (GlcNAc...) asparagine glycosylation is found at Asn-415 and Asn-541. A helical membrane pass occupies residues Leu-688–Ala-708. At Leu-709–Lys-923 the chain is on the cytoplasmic side. Disordered stretches follow at residues Thr-794 to Asn-832 and Ala-893 to Lys-923. The span at Trp-807–Asn-832 shows a compositional bias: polar residues. The span at Asn-913–Lys-923 shows a compositional bias: basic residues.

The protein localises to the cell membrane. Functionally, potential calcium-dependent cell-adhesion protein. May be involved in the establishment and maintenance of specific neuronal connections in the brain. This is Protocadherin gamma-B5 (PCDHGB5) from Pan troglodytes (Chimpanzee).